Reading from the N-terminus, the 417-residue chain is UPF0761 membrane protein CV_0810 (417 aa).

7 helical membrane-spanning segments follow: residues leucine 52–phenylalanine 72, phenylalanine 79–tyrosine 99, leucine 110–glutamate 130, methionine 150–tryptophan 170, leucine 185–leucine 205, phenylalanine 214–threonine 234, and isoleucine 258–phenylalanine 278.

It belongs to the UPF0761 family.

It is found in the cell inner membrane. The sequence is that of UPF0761 membrane protein CV_0810 from Chromobacterium violaceum (strain ATCC 12472 / DSM 30191 / JCM 1249 / CCUG 213 / NBRC 12614 / NCIMB 9131 / NCTC 9757 / MK).